A 169-amino-acid chain; its full sequence is ATP synthase subunit b (169 aa).

Residues 14–34 (TFLAMLISFLILVFILQQVAF) form a helical membrane-spanning segment.

This sequence belongs to the ATPase B chain family. F-type ATPases have 2 components, F(1) - the catalytic core - and F(0) - the membrane proton channel. F(1) has five subunits: alpha(3), beta(3), gamma(1), delta(1), epsilon(1). F(0) has four main subunits: a(1), b(2) and c(10-14). The alpha and beta chains form an alternating ring which encloses part of the gamma chain. F(1) is attached to F(0) by a central stalk formed by the gamma and epsilon chains, while a peripheral stalk is formed by the delta and b chains.

It localises to the cell membrane. In terms of biological role, f(1)F(0) ATP synthase produces ATP from ADP in the presence of a proton or sodium gradient. F-type ATPases consist of two structural domains, F(1) containing the extramembraneous catalytic core and F(0) containing the membrane proton channel, linked together by a central stalk and a peripheral stalk. During catalysis, ATP synthesis in the catalytic domain of F(1) is coupled via a rotary mechanism of the central stalk subunits to proton translocation. Its function is as follows. Component of the F(0) channel, it forms part of the peripheral stalk, linking F(1) to F(0). The protein is ATP synthase subunit b of Heliobacterium modesticaldum (strain ATCC 51547 / Ice1).